A 245-amino-acid polypeptide reads, in one-letter code: 8-amino-3,8-dideoxy-manno-octulosonate cytidylyltransferase (245 aa).

Belongs to the KdsB family.

It is found in the cytoplasm. The catalysed reaction is 8-amino-3,8-dideoxy-alpha-D-manno-octulosonate + CTP = CMP-8-amino-3,8-dideoxy-alpha-D-manno-oct-2-ulosonate + diphosphate. It participates in bacterial outer membrane biogenesis; lipopolysaccharide biosynthesis. In terms of biological role, activates KDO8N (a required 8-carbon sugar) for incorporation into bacterial lipopolysaccharide in the Shewanella genus. In Shewanella amazonensis (strain ATCC BAA-1098 / SB2B), this protein is 8-amino-3,8-dideoxy-manno-octulosonate cytidylyltransferase.